The following is a 188-amino-acid chain: NAD(P)H-quinone oxidoreductase subunit J (188 aa).

The segment covering 1–12 (MSETPSKQTAAS) has biased composition (polar residues). Residues 1 to 23 (MSETPSKQTAASDETGAVVAPEP) form a disordered region.

The protein belongs to the complex I 30 kDa subunit family. In terms of assembly, NDH-1 can be composed of about 15 different subunits; different subcomplexes with different compositions have been identified which probably have different functions.

Its subcellular location is the cellular thylakoid membrane. The enzyme catalyses a plastoquinone + NADH + (n+1) H(+)(in) = a plastoquinol + NAD(+) + n H(+)(out). The catalysed reaction is a plastoquinone + NADPH + (n+1) H(+)(in) = a plastoquinol + NADP(+) + n H(+)(out). Its function is as follows. NDH-1 shuttles electrons from an unknown electron donor, via FMN and iron-sulfur (Fe-S) centers, to quinones in the respiratory and/or the photosynthetic chain. The immediate electron acceptor for the enzyme in this species is believed to be plastoquinone. Couples the redox reaction to proton translocation, and thus conserves the redox energy in a proton gradient. Cyanobacterial NDH-1 also plays a role in inorganic carbon-concentration. The sequence is that of NAD(P)H-quinone oxidoreductase subunit J from Synechococcus sp. (strain CC9605).